A 232-amino-acid polypeptide reads, in one-letter code: Ribose-5-phosphate isomerase A (232 aa).

Substrate is bound by residues 31 to 34, 88 to 91, and 101 to 104; these read TGST, DGAD, and KGGG. The Proton acceptor role is filled by Glu-110. Lys-128 is a substrate binding site.

It belongs to the ribose 5-phosphate isomerase family. Homodimer.

It carries out the reaction aldehydo-D-ribose 5-phosphate = D-ribulose 5-phosphate. It participates in carbohydrate degradation; pentose phosphate pathway; D-ribose 5-phosphate from D-ribulose 5-phosphate (non-oxidative stage): step 1/1. Its function is as follows. Catalyzes the reversible conversion of ribose-5-phosphate to ribulose 5-phosphate. This Lactobacillus gasseri (strain ATCC 33323 / DSM 20243 / BCRC 14619 / CIP 102991 / JCM 1131 / KCTC 3163 / NCIMB 11718 / NCTC 13722 / AM63) protein is Ribose-5-phosphate isomerase A.